The following is a 425-amino-acid chain: Succinyl-diaminopimelate desuccinylase (425 aa).

H96 serves as a coordination point for Zn(2+). D98 is a catalytic residue. D129 contributes to the Zn(2+) binding site. E163 (proton acceptor) is an active-site residue. Residues E164, E192, and H378 each contribute to the Zn(2+) site.

Belongs to the peptidase M20A family. DapE subfamily. Homodimer. Zn(2+) serves as cofactor. Co(2+) is required as a cofactor.

It catalyses the reaction N-succinyl-(2S,6S)-2,6-diaminopimelate + H2O = (2S,6S)-2,6-diaminopimelate + succinate. Its pathway is amino-acid biosynthesis; L-lysine biosynthesis via DAP pathway; LL-2,6-diaminopimelate from (S)-tetrahydrodipicolinate (succinylase route): step 3/3. Functionally, catalyzes the hydrolysis of N-succinyl-L,L-diaminopimelic acid (SDAP), forming succinate and LL-2,6-diaminopimelate (DAP), an intermediate involved in the bacterial biosynthesis of lysine and meso-diaminopimelic acid, an essential component of bacterial cell walls. The protein is Succinyl-diaminopimelate desuccinylase of Polaromonas sp. (strain JS666 / ATCC BAA-500).